A 398-amino-acid polypeptide reads, in one-letter code: Cytohesin-1 (398 aa).

Methionine 1 is subject to N-acetylmethionine. Residues 1-60 (MEDDDSYVPSDLTAEERQELENIRRRKQELLADIQRLKEEIAEVANEIESLGSTEERKNM) form a necessary for localization at adherens junction region. A coiled-coil region spans residues 10-67 (SDLTAEERQELENIRRRKQELLADIQRLKEEIAEVANEIESLGSTEERKNMQRNKQVA). An SEC7 domain is found at 73–202 (FNMDPKKGIQ…IIMLNTSLHN (130 aa)). The 118-residue stretch at 260–377 (NPDREGWLLK…WIKCIKAAIS (118 aa)) folds into the PH domain. A 1,2-diacyl-sn-glycero-3-phospho-(1D-myo-inositol-3,4,5-trisphosphate) contacts are provided by residues 269-277 (KLGGGRVKT), arginine 281, tyrosine 292, arginine 302, and asparagine 351. The C-terminal autoinhibitory region stretch occupies residues 388-396 (RKKKVSSTK).

Interacts with TRIM23 and CYTIP. Interacts (via coiled-coil domain) with FRMD4A (via coiled-coil domain). Interacts with FRMD4B. Found in a complex with PARD3, CYTH1 and FRMD4A. Interacts (via N-terminal domain) with INAVA (via N-terminal domain). Ubiquitinated by SCF(FBXW11) E3 ubiquitin-protein ligase complex. Ubiquitination induces proteasomal degradation. In terms of tissue distribution, expressed in colon and small intestine (at protein level).

It localises to the cell membrane. The protein localises to the cytoplasm. The protein resides in the cytosol. Its subcellular location is the cell junction. It is found in the tight junction. It localises to the adherens junction. In terms of biological role, promotes guanine-nucleotide exchange on ARF1, ARF5 and ARF6. Promotes the activation of ARF factors through replacement of GDP with GTP. Plays an important role in membrane trafficking, during junctional remodeling and epithelial polarization, through regulation of ARF6 activity. This Mus musculus (Mouse) protein is Cytohesin-1 (Cyth1).